A 653-amino-acid polypeptide reads, in one-letter code: Fusexin 1 (653 aa).

The first 24 residues, 1–24 (MKRVGNCWKASVAAFFLLMFTAFA), serve as a signal peptide directing secretion. The Extracellular portion of the chain corresponds to 25–559 (AADTTSVDTV…FENIWSGDAN (535 aa)). 4 disulfide bridges follow: Cys129-Cys167, Cys398-Cys441, Cys468-Cys487, and Cys499-Cys516. The tract at residues 155–160 (DYWTGS) is fusion loop. Residues 560–580 (ALNWLQVFVTFIAFLGGFALV) traverse the membrane as a helical segment. Topologically, residues 581-604 (GVKLGKIVDGLATEFIPVKDSHVR) are cytoplasmic. A run of 2 helical transmembrane segments spans residues 605–625 (LVIG…LVTD) and 626–646 (PLGL…YLSA). At 647 to 653 (SAPEINL) the chain is on the cytoplasmic side.

It belongs to the HAP2/GCS1 family. Fusexin 1 subfamily. As to quaternary structure, homotrimer stabilized by interdomain contacts and numerous Ca(2+) and Na(+) ions.

The protein resides in the cell surface. It localises to the cell membrane. Functionally, exhibits fusogenic activity. Mediates cell-cell fusion in mammalian cells (bilateral fusion). The polypeptide is Fusexin 1 (Haloplanus natans (strain DSM 17983 / JCM 14081 / CGMCC 1.8972 / RE-101)).